A 222-amino-acid polypeptide reads, in one-letter code: Guanylate kinase (222 aa).

The 179-residue stretch at 19-197 (GFLFILSSPS…SVSLIKSIYL (179 aa)) folds into the Guanylate kinase-like domain. 26 to 33 (SPSGAGKS) serves as a coordination point for ATP.

It belongs to the guanylate kinase family.

The protein localises to the cytoplasm. It carries out the reaction GMP + ATP = GDP + ADP. In terms of biological role, essential for recycling GMP and indirectly, cGMP. This is Guanylate kinase from Bartonella henselae (strain ATCC 49882 / DSM 28221 / CCUG 30454 / Houston 1) (Rochalimaea henselae).